A 445-amino-acid chain; its full sequence is Phosphoglucosamine mutase (445 aa).

S99 (phosphoserine intermediate) is an active-site residue. Residues S99, D242, D244, and D246 each contribute to the Mg(2+) site. S99 is modified (phosphoserine).

Belongs to the phosphohexose mutase family. The cofactor is Mg(2+). In terms of processing, activated by phosphorylation.

The catalysed reaction is alpha-D-glucosamine 1-phosphate = D-glucosamine 6-phosphate. Its function is as follows. Catalyzes the conversion of glucosamine-6-phosphate to glucosamine-1-phosphate. This chain is Phosphoglucosamine mutase, found in Campylobacter lari (strain RM2100 / D67 / ATCC BAA-1060).